Consider the following 263-residue polypeptide: Insertion sequence IS21-like putative ATP-binding protein (263 aa).

114-121 (GPSGTGKT) is an ATP binding site.

It belongs to the IS21/IS1162 putative ATP-binding protein family.

The protein is Insertion sequence IS21-like putative ATP-binding protein (tnpB) of Bacteroides fragilis.